Consider the following 951-residue polypeptide: Coiled-coil and C2 domain-containing protein 1A (951 aa).

Disordered stretches follow at residues 80–139 (CMRD…LETT), 185–266 (AIDE…RQRD), 306–346 (VDLS…PPPR), and 437–491 (NQDE…TRAQ). The span at 84 to 104 (PDEDEEEGTDEDDLEADDDLL) shows a compositional bias: acidic residues. Phosphothreonine occurs at positions 92, 204, and 206. Residues 201-210 (PASTPTYSPA) show a composition bias toward low complexity. At serine 208 the chain carries Phosphoserine; by CDK1. Phosphoserine occurs at positions 253 and 324. The span at 311-333 (LPPPPDQLPPDPPSPPSQPPTPA) shows a compositional bias: pro residues. The stretch at 346–392 (RTLLEALEQRMERYQVAAAQAKSKGDQRKARMHERIVKQYQDAIRAH) forms a coiled coil. A Phosphoserine modification is found at serine 455. The span at 475–488 (SAPTAKAPPKATST) shows a compositional bias: low complexity. Residues 484 to 517 (KATSTRAQQQLAFLEGRKKQLLQAALRAKQKNDV) adopt a coiled-coil conformation. The C2 domain occupies 637 to 771 (RFEQRTFSVI…EIACEVREIL (135 aa)). The tract at residues 818–841 (TQVAGPKGKAPPVPAPARESGNRS) is disordered.

This sequence belongs to the CC2D1 family. Post-translationally, phosphorylation on Ser-208 by CDK1 promotes spindle pole localization and association with SCC1/RAD21.

The protein resides in the cytoplasm. It is found in the nucleus. Its subcellular location is the cytoskeleton. It localises to the microtubule organizing center. The protein localises to the centrosome. Transcription factor that binds specifically to the DRE (dual repressor element) and represses HTR1A gene transcription in neuronal cells. The combination of calcium and ATP specifically inactivates the binding with FRE. May play a role in the altered regulation of HTR1A associated with anxiety and major depression. Mediates HDAC-independent repression of HTR1A promoter in neuronal cell. Performs essential function in controlling functional maturation of synapses. Plays distinct roles depending on its localization. When cytoplasmic, acts as a scaffold protein in the PI3K/PDK1/AKT pathway. Repressor of HTR1A when nuclear. In the centrosome, regulates spindle pole localization of the cohesin subunit SCC1/RAD21, thereby mediating centriole cohesion during mitosis. The chain is Coiled-coil and C2 domain-containing protein 1A (CC2D1A) from Homo sapiens (Human).